We begin with the raw amino-acid sequence, 205 residues long: Large ribosomal subunit protein bL25A (205 aa).

It belongs to the bacterial ribosomal protein bL25 family. CTC subfamily. In terms of assembly, part of the 50S ribosomal subunit; part of the 5S rRNA/L5/L18/L25 subcomplex. Contacts the 5S rRNA. Binds to the 5S rRNA independently of L5 and L18.

In terms of biological role, this is one of the proteins that binds to the 5S RNA in the ribosome where it forms part of the central protuberance. This is Large ribosomal subunit protein bL25A from Symbiobacterium thermophilum (strain DSM 24528 / JCM 14929 / IAM 14863 / T).